A 281-amino-acid polypeptide reads, in one-letter code: Probable endonuclease 4 (281 aa).

Zn(2+)-binding residues include H69, H109, E145, D179, H182, H216, D229, H231, and E261.

It belongs to the AP endonuclease 2 family. Zn(2+) is required as a cofactor.

The catalysed reaction is Endonucleolytic cleavage to 5'-phosphooligonucleotide end-products.. Functionally, endonuclease IV plays a role in DNA repair. It cleaves phosphodiester bonds at apurinic or apyrimidinic (AP) sites, generating a 3'-hydroxyl group and a 5'-terminal sugar phosphate. In Chlorobaculum tepidum (strain ATCC 49652 / DSM 12025 / NBRC 103806 / TLS) (Chlorobium tepidum), this protein is Probable endonuclease 4.